The following is a 311-amino-acid chain: tRNA dimethylallyltransferase (311 aa).

9 to 16 (GPTAVGKT) contacts ATP. A substrate-binding site is contributed by 11-16 (TAVGKT). The tract at residues 34-37 (DSMQ) is interaction with substrate tRNA.

Belongs to the IPP transferase family. In terms of assembly, monomer. Mg(2+) serves as cofactor.

The catalysed reaction is adenosine(37) in tRNA + dimethylallyl diphosphate = N(6)-dimethylallyladenosine(37) in tRNA + diphosphate. Catalyzes the transfer of a dimethylallyl group onto the adenine at position 37 in tRNAs that read codons beginning with uridine, leading to the formation of N6-(dimethylallyl)adenosine (i(6)A). In Clostridium botulinum (strain Hall / ATCC 3502 / NCTC 13319 / Type A), this protein is tRNA dimethylallyltransferase.